We begin with the raw amino-acid sequence, 255 residues long: Glutamate racemase (255 aa).

Substrate contacts are provided by residues 7 to 8 (DS) and 39 to 40 (YG). The active-site Proton donor/acceptor is the Cys70. Substrate is bound at residue 71–72 (NT). The Proton donor/acceptor role is filled by Cys181. A substrate-binding site is contributed by 182–183 (TH).

It belongs to the aspartate/glutamate racemases family.

The catalysed reaction is L-glutamate = D-glutamate. It participates in cell wall biogenesis; peptidoglycan biosynthesis. In terms of biological role, provides the (R)-glutamate required for cell wall biosynthesis. The sequence is that of Glutamate racemase from Helicobacter pylori (strain ATCC 700392 / 26695) (Campylobacter pylori).